A 403-amino-acid chain; its full sequence is Probable tRNA sulfurtransferase (403 aa).

The THUMP domain maps to 60–165; that stretch reads KLAEERLKPI…KEGVFLSCRT (106 aa). Residues 183–184, 208–209, Arg265, Gly287, and Gln296 each bind ATP; these read ML and HF.

This sequence belongs to the ThiI family.

It localises to the cytoplasm. It catalyses the reaction [ThiI sulfur-carrier protein]-S-sulfanyl-L-cysteine + a uridine in tRNA + 2 reduced [2Fe-2S]-[ferredoxin] + ATP + H(+) = [ThiI sulfur-carrier protein]-L-cysteine + a 4-thiouridine in tRNA + 2 oxidized [2Fe-2S]-[ferredoxin] + AMP + diphosphate. It carries out the reaction [ThiS sulfur-carrier protein]-C-terminal Gly-Gly-AMP + S-sulfanyl-L-cysteinyl-[cysteine desulfurase] + AH2 = [ThiS sulfur-carrier protein]-C-terminal-Gly-aminoethanethioate + L-cysteinyl-[cysteine desulfurase] + A + AMP + 2 H(+). The protein operates within cofactor biosynthesis; thiamine diphosphate biosynthesis. In terms of biological role, catalyzes the ATP-dependent transfer of a sulfur to tRNA to produce 4-thiouridine in position 8 of tRNAs, which functions as a near-UV photosensor. Also catalyzes the transfer of sulfur to the sulfur carrier protein ThiS, forming ThiS-thiocarboxylate. This is a step in the synthesis of thiazole, in the thiamine biosynthesis pathway. The sulfur is donated as persulfide by IscS. The polypeptide is Probable tRNA sulfurtransferase (Listeria welshimeri serovar 6b (strain ATCC 35897 / DSM 20650 / CCUG 15529 / CIP 8149 / NCTC 11857 / SLCC 5334 / V8)).